We begin with the raw amino-acid sequence, 71 residues long: Small ribosomal subunit protein bS21 (71 aa).

The protein belongs to the bacterial ribosomal protein bS21 family.

This chain is Small ribosomal subunit protein bS21, found in Marinobacter nauticus (strain ATCC 700491 / DSM 11845 / VT8) (Marinobacter aquaeolei).